The chain runs to 549 residues: Glucose-6-phosphate isomerase (549 aa).

Glu-355 serves as the catalytic Proton donor. Residues His-386 and Lys-514 contribute to the active site.

This sequence belongs to the GPI family.

The protein resides in the cytoplasm. The enzyme catalyses alpha-D-glucose 6-phosphate = beta-D-fructose 6-phosphate. Its pathway is carbohydrate biosynthesis; gluconeogenesis. The protein operates within carbohydrate degradation; glycolysis; D-glyceraldehyde 3-phosphate and glycerone phosphate from D-glucose: step 2/4. In terms of biological role, catalyzes the reversible isomerization of glucose-6-phosphate to fructose-6-phosphate. The polypeptide is Glucose-6-phosphate isomerase (Salmonella paratyphi C (strain RKS4594)).